The primary structure comprises 710 residues: Cyclin-dependent kinase G-2 (710 aa).

Residues 1–350 (MAAGRHGGYR…ETPEPVKPPH (350 aa)) form a disordered region. Over residues 8–30 (GYRDYEARERELDAEASRRSKEQ) the composition is skewed to basic and acidic residues. Residues 31–40 (QHHHHPSGRH) show a composition bias toward basic residues. Positions 41–64 (QRGDSDPRCEADRRRDGGRSRGGR) are enriched in basic and acidic residues. Residues 124–133 (SVVAASASSP) show a composition bias toward low complexity. The span at 144-163 (WDRDSPKPMHSDVAKGKKAV) shows a compositional bias: basic and acidic residues. The span at 170-182 (LPLPPPPPLPPQD) shows a compositional bias: pro residues. 2 stretches are compositionally biased toward basic and acidic residues: residues 183–195 (HIPE…KSPM) and 209–218 (LQEHAESRVM). Acidic residues predominate over residues 299–308 (DENEDLEVDK). The span at 335–344 (YEVRRSETPE) shows a compositional bias: basic and acidic residues. One can recognise a Protein kinase domain in the interval 365-656 (FERLNKINEG…ADAALQHEWF (292 aa)). ATP is bound by residues 371-379 (INEGTYGVV) and K394. Phosphothreonine is present on T375. A Phosphotyrosine modification is found at Y376. The active-site Proton acceptor is the D489. S516 carries the phosphoserine modification. T522 carries the post-translational modification Phosphothreonine.

This sequence belongs to the protein kinase superfamily. CMGC Ser/Thr protein kinase family. CDC2/CDKX subfamily.

It carries out the reaction L-seryl-[protein] + ATP = O-phospho-L-seryl-[protein] + ADP + H(+). The catalysed reaction is L-threonyl-[protein] + ATP = O-phospho-L-threonyl-[protein] + ADP + H(+). The enzyme catalyses [DNA-directed RNA polymerase] + ATP = phospho-[DNA-directed RNA polymerase] + ADP + H(+). The sequence is that of Cyclin-dependent kinase G-2 (CDKG-2) from Oryza sativa subsp. indica (Rice).